A 466-amino-acid polypeptide reads, in one-letter code: Ribosome biogenesis protein YTM1 (466 aa).

Positions 11-99 are ubiquitin-like (UBL) domain; that stretch reads IKIKFFTNEE…EAFLTLEYTR (89 aa). The segment at 109–466 is sufficient for interaction with ERB1 and association with 66S pre-ribosomes; it reads SFNNDDWISS…QINKGSDIAK (358 aa). WD repeat units follow at residues 124–163, 165–203, 219–258, 296–336, 338–377, 384–424, and 431–466; these read PTTK…EKQY, GHSA…IIDE, GHKA…MTSI, GHSE…CVDT, TTGY…TSDQ, GHTN…SLYT, and STNA…DIAK.

This sequence belongs to the WD repeat WDR12/YTM1 family. As to quaternary structure, component of the NOP7 complex, composed of ERB1, NOP7 and YTM1. The complex is held together by ERB1, which interacts with NOP7 via its N-terminal domain and with YTM1 via a high-affinity interaction between the seven-bladed beta-propeller domains of the 2 proteins. The NOP7 complex associates with the 66S pre-ribosome. Interacts (via UBL domain) with MDN1 (via VWFA/MIDAS domain).

It is found in the nucleus. It localises to the nucleolus. Its subcellular location is the nucleoplasm. Its function is as follows. Component of the NOP7 complex, which is required for maturation of the 25S and 5.8S ribosomal RNAs and formation of the 60S ribosome. The polypeptide is Ribosome biogenesis protein YTM1 (Candida albicans (strain SC5314 / ATCC MYA-2876) (Yeast)).